The sequence spans 282 residues: Shikimate dehydrogenase (NADP(+)) (282 aa).

Shikimate is bound by residues 15-17 (SKS) and threonine 62. Lysine 66 (proton acceptor) is an active-site residue. Shikimate-binding residues include asparagine 87 and aspartate 103. NADP(+) is bound by residues 127–131 (GAGGA), 151–156 (NRTHTK), and methionine 220. Tyrosine 222 contacts shikimate. Glycine 244 is a binding site for NADP(+).

The protein belongs to the shikimate dehydrogenase family. As to quaternary structure, homodimer.

The catalysed reaction is shikimate + NADP(+) = 3-dehydroshikimate + NADPH + H(+). The protein operates within metabolic intermediate biosynthesis; chorismate biosynthesis; chorismate from D-erythrose 4-phosphate and phosphoenolpyruvate: step 4/7. Functionally, involved in the biosynthesis of the chorismate, which leads to the biosynthesis of aromatic amino acids. Catalyzes the reversible NADPH linked reduction of 3-dehydroshikimate (DHSA) to yield shikimate (SA). The sequence is that of Shikimate dehydrogenase (NADP(+)) from Shewanella baltica (strain OS223).